The following is a 437-amino-acid chain: Exosome complex component RRP45 (437 aa).

Ser65 carries the phosphoserine modification. Lys297 is modified (N6-acetyllysine; alternate). Lys297 is covalently cross-linked (Glycyl lysine isopeptide (Lys-Gly) (interchain with G-Cter in SUMO1); alternate). Lys297 is covalently cross-linked (Glycyl lysine isopeptide (Lys-Gly) (interchain with G-Cter in SUMO2); alternate). Residues Ser306 and Ser346 each carry the phosphoserine modification. Residues 339 to 437 (IGEGIENSWG…KRRKKKRTAN (99 aa)) form a disordered region. Residues 349-363 (DLEDSEKEEEEEGGI) are compositionally biased toward acidic residues. Phosphoserine occurs at positions 392, 394, and 407. A compositionally biased stretch (polar residues) spans 413 to 425 (AQTSANQKAPSKS). Basic residues predominate over residues 426–437 (QGKRRKKKRTAN).

This sequence belongs to the RNase PH family. Component of the RNA exosome core complex (Exo-9), composed of EXOSC1, EXOSC2, EXOSC3, EXOSC4, EXOSC5, EXOSC6, EXOSC7, EXOSC8 and EXOSC9; within the complex interacts with EXOSC3, EXOSC4, EXOSC5 and DIS3. The catalytically inactive RNA exosome core complex (Exo-9) associates with the catalytic subunit EXOSC10/RRP6. Exo-9 may associate with DIS3 to form the nucleolar exosome complex, or DIS3L to form the cytoplasmic exosome complex. Exo-9 is formed by a hexameric base ring consisting of the heterodimers EXOSC4-EXOSC9, EXOSC5-EXOSC8 and EXOSC6-EXOSC7, and a cap ring consisting of EXOSC1, EXOSC2 and EXOSC3. The RNA exosome complex associates with cofactors C1D/RRP47, MPHOSPH6/MPP6 and MTREX/MTR4. Interacts (via C-terminus region) with SETX (via N-terminus domain); the interaction enhances SETX sumoylation. Interacts with DIS3; the interaction is direct.

The protein localises to the cytoplasm. The protein resides in the nucleus. It is found in the nucleolus. It localises to the nucleoplasm. In terms of biological role, non-catalytic component of the RNA exosome complex which has 3'-&gt;5' exoribonuclease activity and participates in a multitude of cellular RNA processing and degradation events. In the nucleus, the RNA exosome complex is involved in proper maturation of stable RNA species such as rRNA, snRNA and snoRNA, in the elimination of RNA processing by-products and non-coding 'pervasive' transcripts, such as antisense RNA species and promoter-upstream transcripts (PROMPTs), and of mRNAs with processing defects, thereby limiting or excluding their export to the cytoplasm. The RNA exosome may be involved in Ig class switch recombination (CSR) and/or Ig variable region somatic hypermutation (SHM) by targeting AICDA deamination activity to transcribed dsDNA substrates. In the cytoplasm, the RNA exosome complex is involved in general mRNA turnover and specifically degrades inherently unstable mRNAs containing AU-rich elements (AREs) within their 3' untranslated regions, and in RNA surveillance pathways, preventing translation of aberrant mRNAs. It seems to be involved in degradation of histone mRNA. The catalytic inactive RNA exosome core complex of 9 subunits (Exo-9) is proposed to play a pivotal role in the binding and presentation of RNA for ribonucleolysis, and to serve as a scaffold for the association with catalytic subunits and accessory proteins or complexes. EXOSC9 binds to ARE-containing RNAs. The chain is Exosome complex component RRP45 (Exosc9) from Rattus norvegicus (Rat).